Consider the following 295-residue polypeptide: Sperm acrosome membrane-associated protein 1 (295 aa).

Positions 1–29 are cleaved as a signal peptide; it reads MSPGGAGCSAGLLLTVGWLLLAGLQSTCG. The Extracellular segment spans residues 30–220; sequence INVTAVQDPS…SRPDTDAVLV (191 aa). Residues 39–71 form a disordered region; it reads SLVSEGENEGEEEAENDSEVENEPQAEAEQDVS. Positions 44 to 68 are enriched in acidic residues; it reads GENEGEEEAENDSEVENEPQAEAEQ. An N-linked (GlcNAc...) asparagine glycan is attached at N72. The helical transmembrane segment at 221–241 threads the bilayer; sequence FVLTIGVIICIFVIFVLIFII. Residues 242–295 are Cytoplasmic-facing; sequence VNWATVKDFWASKASTTEIQSELSSMKYKDSTSLDQSPTEIPGHEDDALSEWNE. Phosphoserine is present on S256. A disordered region spans residues 263–295; that stretch reads ELSSMKYKDSTSLDQSPTEIPGHEDDALSEWNE. Position 269 is a phosphotyrosine (Y269). A phosphoserine mark is found at S278 and S291.

As to quaternary structure, interacts with CYLC1; the interaction may be relevant for proper acrosome attachment to the nuclear envelope. Post-translationally, N-glycosylated. As to expression, detected in spermatozoa (at protein level).

It localises to the cytoplasmic vesicle. Its subcellular location is the secretory vesicle. The protein resides in the acrosome inner membrane. Functionally, plays a role in acrosome expansion and establishment of normal sperm morphology during spermatogenesis. Important for male fertility. The protein is Sperm acrosome membrane-associated protein 1 of Sus scrofa (Pig).